We begin with the raw amino-acid sequence, 565 residues long: CTP synthase (565 aa).

The amidoligase domain stretch occupies residues M1–I272. Residue S18 coordinates CTP. UTP is bound at residue S18. Residue S19–I24 coordinates ATP. Residue Y59 coordinates L-glutamine. D76 is an ATP binding site. Mg(2+)-binding residues include D76 and E146. Residues D153 to E155, K193 to Q198, and K229 contribute to the CTP site. UTP-binding positions include K193–Q198 and K229. A Glutamine amidotransferase type-1 domain is found at T299–G543. G363 lines the L-glutamine pocket. The active-site Nucleophile; for glutamine hydrolysis is C390. L-glutamine-binding positions include L391–Q394, E414, and R471. Catalysis depends on residues H516 and E518.

This sequence belongs to the CTP synthase family. As to quaternary structure, homotetramer.

It carries out the reaction UTP + L-glutamine + ATP + H2O = CTP + L-glutamate + ADP + phosphate + 2 H(+). It catalyses the reaction L-glutamine + H2O = L-glutamate + NH4(+). The enzyme catalyses UTP + NH4(+) + ATP = CTP + ADP + phosphate + 2 H(+). The protein operates within pyrimidine metabolism; CTP biosynthesis via de novo pathway; CTP from UDP: step 2/2. Allosterically activated by GTP, when glutamine is the substrate; GTP has no effect on the reaction when ammonia is the substrate. The allosteric effector GTP functions by stabilizing the protein conformation that binds the tetrahedral intermediate(s) formed during glutamine hydrolysis. Inhibited by the product CTP, via allosteric rather than competitive inhibition. Its function is as follows. Catalyzes the ATP-dependent amination of UTP to CTP with either L-glutamine or ammonia as the source of nitrogen. Regulates intracellular CTP levels through interactions with the four ribonucleotide triphosphates. This chain is CTP synthase, found in Chlorobium phaeobacteroides (strain BS1).